The sequence spans 341 residues: Ribonucleoside-diphosphate reductase subunit beta (341 aa).

Fe cation-binding residues include D89, E120, and H123. Y127 is an active-site residue. Fe cation is bound by residues E185, E219, and H222.

This sequence belongs to the ribonucleoside diphosphate reductase small chain family. In terms of assembly, tetramer of two alpha and two beta subunits. Fe cation serves as cofactor.

It catalyses the reaction a 2'-deoxyribonucleoside 5'-diphosphate + [thioredoxin]-disulfide + H2O = a ribonucleoside 5'-diphosphate + [thioredoxin]-dithiol. In terms of biological role, provides the precursors necessary for DNA synthesis. Catalyzes the biosynthesis of deoxyribonucleotides from the corresponding ribonucleotides. This is Ribonucleoside-diphosphate reductase subunit beta (nrdB) from Helicobacter pylori (strain J99 / ATCC 700824) (Campylobacter pylori J99).